Consider the following 709-residue polypeptide: MEKTFNLTRREDGIAILMMDVPGETMNTLKAEFGPEISEILSEIKRDSSIRGLVLISGKKDSFVAGADISMLDACQTAGDAKALSQQGHVVFNELEALNIPVVAAIHGACLGGGLELALACHQRVCSDDGKTMLGVPEVQLGLLPGGGGTQRLPRLVGITTALDMMLTGKQIRPKQALKMGLVNDVVPQTILLQTAVEMALAGKRTAKPVKKSLVNQLLEGTGFGRNIIFDQAAKQVVKKTQGNYPAPAKIIDCVRQGMAKGMQKGLEVEASHFAELVVSKESEALRSIFFATTEMKKETGAEGATPRKVKKAVILGGGLMGGGIASVTTTKAKIPARVKDINEKGLSNALSYAYKLLDKGVKRRHMTPAVRDNLMALMTTTTEYKGVKDADIVVEAVFEDLALKHQMVKDIERECGEHTIFASNTSSLPIGQIAQAASRPENVIGLHYFSPVEKMPLVEVIAHAKTSPETIATTVAFARKQGKTPIVVQDGAGFYVNRILALYMNEAAQLLLEGQSIEHLDKALVKFGFPVGPITLLDEVGIDVGAKIAPILEKELGERFKAPAAFDKLLSDDRKGRKNGKGFYQYAAGNKASSKKKAVDESVYAVLGIKPGMDKDLSAVAERCVVQMLNEAVRCLDDGIIASPRDGDIGAIFGIGFPPFLGGPFHYIDTLGADNLVNILERYQAQYGDRFEPCPRLKAMAAEKARFF.

Residues 1-188 form an enoyl-CoA hydratase region; that stretch reads MEKTFNLTRR…KMGLVNDVVP (188 aa). A 3-hydroxyacyl-CoA dehydrogenase region spans residues 308–709; it reads RKVKKAVILG…AMAAEKARFF (402 aa).

This sequence in the N-terminal section; belongs to the enoyl-CoA hydratase/isomerase family. It in the central section; belongs to the 3-hydroxyacyl-CoA dehydrogenase family. As to quaternary structure, heterotetramer of two alpha chains (FadJ) and two beta chains (FadI).

The protein localises to the cytoplasm. The catalysed reaction is a (3S)-3-hydroxyacyl-CoA = a (2E)-enoyl-CoA + H2O. The enzyme catalyses a 4-saturated-(3S)-3-hydroxyacyl-CoA = a (3E)-enoyl-CoA + H2O. It catalyses the reaction a (3S)-3-hydroxyacyl-CoA + NAD(+) = a 3-oxoacyl-CoA + NADH + H(+). It carries out the reaction (3S)-3-hydroxybutanoyl-CoA = (3R)-3-hydroxybutanoyl-CoA. Its pathway is lipid metabolism; fatty acid beta-oxidation. In terms of biological role, catalyzes the formation of a hydroxyacyl-CoA by addition of water on enoyl-CoA. Also exhibits 3-hydroxyacyl-CoA epimerase and 3-hydroxyacyl-CoA dehydrogenase activities. This Shewanella sp. (strain ANA-3) protein is Fatty acid oxidation complex subunit alpha.